Reading from the N-terminus, the 505-residue chain is OVARIAN TUMOR DOMAIN-containing deubiquitinating enzyme 6 (505 aa).

The interval 1–191 (MTRILVQRGS…NSSDEHMPCY (191 aa)) is disordered. Residues 9–30 (GSSGSSSNSSRPSSSSSSSSGS) are compositionally biased toward low complexity. The span at 51–72 (DEKQEEVTVVEKAECSDAKDVA) shows a compositional bias: basic and acidic residues. Residues 73 to 86 (VDSDEPADREDDEG) show a composition bias toward acidic residues. Over residues 115–124 (PPVPAPPPKP) the composition is skewed to pro residues. Over residues 159 to 173 (SSRSSPTGSHPSSPR) the composition is skewed to low complexity. Residues 174–188 (SHSENEGYNSSDEHM) are compositionally biased toward basic and acidic residues. The 124-residue stretch at 216–339 (FEIRRMLEDG…GNHYNSLVDP (124 aa)) folds into the OTU domain. Residue Asp-224 is part of the active site. The active-site Nucleophile is the Cys-227. The active site involves His-332. The interval 416–447 (RIGPKESSTSNAETSSSGARPSGSDSKPAEAV) is disordered. The segment covering 421 to 441 (ESSTSNAETSSSGARPSGSDS) has biased composition (low complexity). A UBA domain is found at 446-491 (AVKEKTVLSSSIEMVLSMGFSYAQAMEAYSIFGDDVDSMVCYVLET).

This sequence belongs to the peptidase C85 family. In terms of assembly, interacts with KDM1C. As to expression, mostly expressed in stems flowers and siliques, and, to a lower extent, in leaves, roots and seedlings.

The protein localises to the nucleus. Its subcellular location is the cytoplasm. The enzyme catalyses Thiol-dependent hydrolysis of ester, thioester, amide, peptide and isopeptide bonds formed by the C-terminal Gly of ubiquitin (a 76-residue protein attached to proteins as an intracellular targeting signal).. Its function is as follows. Hydrolase that can remove conjugated ubiquitin from proteins in vitro and may therefore play an important regulatory role at the level of protein turnover by preventing degradation. Binds chromatin (e.g. nucleosomes and histones) and has enzymatic histone deubiquitinase activity, specific for the H2B histone. Can both repress (e.g. OSR2) and promote (e.g. AN3) the expression of target genes by associating with chromatin, deubiquitinating H2B and regulating its euchromatic histone marks (e.g. H3ac and H3K4me). In association with LDL1/KDM1C, involved in transcriptional gene repression via histone deubiquitination and demethylation. Promotes the concerted epigenetic regulation and repression (e.g. the removal of euchromatic histone acetylation, ubiquitination, and methylation marks) of a set of genes (e.g. GA20OX, WUS, OSR2, ARL and ABI5) that collectively limit plant growth thus stimulating plant growth and increasing cell size. This Arabidopsis thaliana (Mouse-ear cress) protein is OVARIAN TUMOR DOMAIN-containing deubiquitinating enzyme 6.